A 282-amino-acid chain; its full sequence is 4-diphosphocytidyl-2-C-methyl-D-erythritol kinase (282 aa).

Lys13 is a catalytic residue. An ATP-binding site is contributed by 96 to 106 (PMGGGIGGGSS). The active site involves Asp138.

This sequence belongs to the GHMP kinase family. IspE subfamily.

It catalyses the reaction 4-CDP-2-C-methyl-D-erythritol + ATP = 4-CDP-2-C-methyl-D-erythritol 2-phosphate + ADP + H(+). Its pathway is isoprenoid biosynthesis; isopentenyl diphosphate biosynthesis via DXP pathway; isopentenyl diphosphate from 1-deoxy-D-xylulose 5-phosphate: step 3/6. Functionally, catalyzes the phosphorylation of the position 2 hydroxy group of 4-diphosphocytidyl-2C-methyl-D-erythritol. The chain is 4-diphosphocytidyl-2-C-methyl-D-erythritol kinase from Pseudomonas syringae pv. syringae (strain B728a).